Reading from the N-terminus, the 2153-residue chain is MGAQVSRQNVGTHSTQNMVSNGSSLNYFNINYFKDAASSGASRLDFSQDPSKFTDPVKDVLEKGIPTLQSPSVEACGYSDRIIQITRGDSTITSQDVANAVVGYGVWPHYLTPQDATAIDKPTQPDTSSNRFYTLDSKMWNSTSKGWWWKLPDALKDMGIFGENMFYHFLGRSGYTVHVQCNASKFHQGTLLVVMIPEHQLATVNKGNVNAGYKYTHPGEAGREVGTQVENEKQPSDDNWLNFDGTLLGNLLIFPHQFINLRSNNSATLIVPYVNAVPMDSMVRHNNWSLVIIPVCQLQSNNISNIVPITVSISPMCAEFSGARAKTVVQGLPVYVTPGSGQFMTTDDMQSPCALPWYHPTKEIFIPGEVKNLIEMCQVDTLIPINSTQSNIGNVSMYTVTLSPQTKLAEEIFAIKVDIASHPLATTLIGEIASYFTHWTGSLRFSFMFCGTANTTLKVLLAYTPPGIGKPRSRKEAMLGTHVVWDVGLQSTVSLVVPWISASQYRFTTPDTYSSAGYITCWYQTNFVVPPNTPNTAEMLCFVSGCKDFCLRMARDTDLHKQTGPITQNPVERYVDEVLNEVLVVPNINQSHPTTSNAAPVLDAAETGHTNKIQPEDTIETRYVQSSQTLDEMSVESFLGRSGCIHESVLDIVDNYNDQSFTKWNINLQEMAQIRRKFEMFTYARFDSEITMVPSVAAKDGHIGHIVMQYMYVPPGAPIPTTRDDYAWQSGTNASVFWQHGQPFPRFSLPFLSIASAYYMFYDGYDGDTYKSRYGTVVTNDMGTLCSRIVTSEQLHKVKVVTRIYHKAKHTKAWCPRPPRAVQYSHTHTTNYKLSSEVHNDVAIRPRTNLTTVGPSDMYVHVGNLIYRNLHLFNSDIHDSILVSYSSDLIIYRTSTQGDGYIPTCNCTEATYYCKHKNRYYPINVTPHDWYEIQESEYYPKHIQYNLLIGEGPCEPGDCGGKLLCKHGVIGIITAGGEGHVAFIDLRHFHCAEEQGITDYIHMLGEAFGSGFVDSVKDQINSINPINNISSKMVKWMLRIISAMVIIIRNSSDPQTIIATLTLIGCNGSPWRFLKEKFCKWTQLTYIHKESDSWLKKFTEMCNAARGLEWIGNKISKFIDWMKSMLPQAQLKVKYLSELKKLNFLEKQVENLRAADTNTQEKIKCEIDTLHDLSCKFLPLYASEAKRIKVLYHKCTNIIKQKKRSEPVAVMIHGPPGTGKSITTSFLARMITNESDIYSLPPDPKYFDGYDNQSVVIMDDIMQNPGGEDMTLFCQMVSSVTFIPPMADLPDKGKPFDSRFVLCSTNHSLLAPPTISSLPAMNRRFYLDLDILVHDNYKDNQGKLDVSRAFRLCDVDSKIGNAKCCPFVCGKAVTFKDRNTCRTYSLSQIYNQILEEDKRRRQVVDVMSAIFQGPISMDKPPPPAITDLLRSVRTPEVIKYCQDNKWIVPADCQIERDLNIANSIITIIANIISIAGIIYIIYKLFCSLQGPYSGEPKPKTKVPERRVVAQGPEEEFGMSIIKNNTCVVTTTNGKFTGLGIYDRILILPTHADPGSEIQVNGIHTKVLDSYDLFNKEGVKLEITVLKLDRNEKFRDIRKYIPESEDDYPECNLALVANQTEPTIIKVGDVVSYGNILLSGTQTARMLKYNYPTKSGYCGGVLYKIGQILGIHVGGNGRDGFSSMLLRSYFTEQQGQIQISKHVKDVGLPSIHTPTKTKLQPSVFYDIFPGSKEPAVLTEKDPRLKVDFDSALFSKYKGNTECSLNEHIQVAVAHYSAQLATLDIDPQPIAMEDSVFGMDGLEALDLNTSAGYPYVTLGIKKKDLINNKTKDISKLKLALDKYDVDLPMITFLKDELRKKDKIAAGKTRVIEASSINDTILFRTVYGNLFSKFHLNPGVVTGCAVGCDPETFWSKIPLMLDGDCIMAFDYTNYDGSIHPIWFKALGMVLDNLSFNPTLINRLCNSKHIFKSTYYEVEGGVPSGCSGTSIFNSMINNIIIRTLVLDAYKHIDLDKLKIIAYGDDVIFSYKYKLDMEAIAKEGQKYGLTITPADKSSEFKELDYGNVTFLKRGFRQDDKYKFLIHPTFPVEEIYESIRWTKKPSQMQEHVLSLCHLMWHNGPEIYKDFETKIRSVSAGRALYIPPYELLRHEWYEKF.

The N-myristoyl glycine; by host moiety is linked to residue G2. At 2 to 1466 (GAQVSRQNVG…DLNIANSIIT (1465 aa)) the chain is on the cytoplasmic side. The segment at 565–582 (PITQNPVERYVDEVLNEV) is amphipathic alpha-helix. Residues H871 and D888 each act as for protease 2A activity in the active site. Residues C905 and C907 each contribute to the Zn(2+) site. C959 serves as the catalytic For protease 2A activity. Zn(2+)-binding residues include C965 and H967. A membrane-binding region spans residues 1091–1160 (SDSWLKKFTE…NLRAADTNTQ (70 aa)). The oligomerization stretch occupies residues 1091-1224 (SDSWLKKFTE…PPGTGKSITT (134 aa)). An RNA-binding region spans residues 1112–1116 (GNKIS). In terms of domain architecture, SF3 helicase spans 1186-1346 (KRIKVLYHKC…YKDNQGKLDV (161 aa)). Residues C1353, C1364, and C1369 each coordinate Zn(2+). The C4-type; degenerate zinc-finger motif lies at 1353–1369 (CDVDSKIGNAKCCPFVC). Residues 1396–1403 (EDKRRRQV) are RNA-binding. Residues 1407 to 1412 (MSAIFQ) form an oligomerization region. The stretch at 1467–1482 (IIANIISIAGIIYIIY) is an intramembrane region. Over 1483–2153 (KLFCSLQGPY…LLRHEWYEKF (671 aa)) the chain is Cytoplasmic. Residue Y1492 is modified to O-(5'-phospho-RNA)-tyrosine. One can recognise a Peptidase C3 domain in the interval 1511-1689 (GPEEEFGMSI…FSSMLLRSYF (179 aa)). Catalysis depends on for protease 3C activity residues H1550, E1581, and C1657. Positions 1921-2034 (DCIMAFDYTN…SYKYKLDMEA (114 aa)) constitute a RdRp catalytic domain. Mg(2+) is bound by residues D1927 and D2020.

Belongs to the picornaviruses polyprotein family. In terms of assembly, interacts with capsid protein VP1 and capsid protein VP3 to form heterotrimeric protomers. Interacts with capsid protein VP0, and capsid protein VP3 to form heterotrimeric protomers. Five protomers subsequently associate to form pentamers which serve as building blocks for the capsid. Interacts with capsid protein VP2, capsid protein VP3 and capsid protein VP4 following cleavage of capsid protein VP0. As to quaternary structure, interacts with capsid protein VP1 and capsid protein VP3 in the mature capsid. In terms of assembly, interacts with capsid protein VP0 and capsid protein VP1 to form heterotrimeric protomers. Five protomers subsequently associate to form pentamers which serve as building blocks for the capsid. Interacts with capsid protein VP4 in the mature capsid. Interacts with protein 2C; this interaction may be important for virion morphogenesis. Interacts with capsid protein VP1 and capsid protein VP3. As to quaternary structure, homodimer. In terms of assembly, homohexamer; forms a hexameric ring structure with 6-fold symmetry characteristic of AAA+ ATPases. Interacts (via N-terminus) with host RTN3 (via reticulon domain); this interaction is important for viral replication. Interacts with capsid protein VP3; this interaction may be important for virion morphogenesis. Interacts with protein 3CD. As to quaternary structure, homodimer. Interacts with host GBF1. Interacts (via GOLD domain) with host ACBD3 (via GOLD domain); this interaction allows the formation of a viral protein 3A/ACBD3 heterotetramer with a 2:2 stoichiometry, which will stimulate the recruitment of host PI4KB in order to synthesize PI4P at the viral RNA replication sites. In terms of assembly, interacts with RNA-directed RNA polymerase. Interacts with protein 3AB and with RNA-directed RNA polymerase. As to quaternary structure, interacts with Viral protein genome-linked and with protein 3CD. Mg(2+) serves as cofactor. Specific enzymatic cleavages in vivo by the viral proteases yield processing intermediates and the mature proteins. In terms of processing, myristoylation is required for the formation of pentamers during virus assembly. Further assembly of 12 pentamers and a molecule of genomic RNA generates the provirion. Post-translationally, during virion maturation, immature virions are rendered infectious following cleavage of VP0 into VP4 and VP2. This maturation seems to be an autocatalytic event triggered by the presence of RNA in the capsid and it is followed by a conformational change infectious virion. Myristoylation is required during RNA encapsidation and formation of the mature virus particle. In terms of processing, VPg is uridylylated by the polymerase into VPg-pUpU. This acts as a nucleotide-peptide primer for the genomic RNA replication.

The protein resides in the virion. It is found in the host cytoplasm. The protein localises to the host cytoplasmic vesicle membrane. Its subcellular location is the host nucleus. It catalyses the reaction a ribonucleoside 5'-triphosphate + H2O = a ribonucleoside 5'-diphosphate + phosphate + H(+). It carries out the reaction Selective cleavage of Tyr-|-Gly bond in the picornavirus polyprotein.. The enzyme catalyses RNA(n) + a ribonucleoside 5'-triphosphate = RNA(n+1) + diphosphate. The catalysed reaction is Selective cleavage of Gln-|-Gly bond in the poliovirus polyprotein. In other picornavirus reactions Glu may be substituted for Gln, and Ser or Thr for Gly.. Replication or transcription is subject to high level of random mutations by the nucleotide analog ribavirin. Its function is as follows. Forms an icosahedral capsid of pseudo T=3 symmetry with capsid proteins VP2 and VP3. The capsid is 300 Angstroms in diameter, composed of 60 copies of each capsid protein and enclosing the viral positive strand RNA genome. Capsid protein VP1 mainly forms the vertices of the capsid. Capsid protein VP1 interacts with host cell receptor to provide virion attachment to target host cells. This attachment induces virion internalization. Tyrosine kinases are probably involved in the entry process. After binding to its receptor, the capsid undergoes conformational changes. Capsid protein VP1 N-terminus (that contains an amphipathic alpha-helix) and capsid protein VP4 are externalized. Together, they shape a pore in the host membrane through which viral genome is translocated to host cell cytoplasm. In terms of biological role, forms an icosahedral capsid of pseudo T=3 symmetry with capsid proteins VP2 and VP3. The capsid is 300 Angstroms in diameter, composed of 60 copies of each capsid protein and enclosing the viral positive strand RNA genome. Functionally, lies on the inner surface of the capsid shell. After binding to the host receptor, the capsid undergoes conformational changes. Capsid protein VP4 is released, Capsid protein VP1 N-terminus is externalized, and together, they shape a pore in the host membrane through which the viral genome is translocated into the host cell cytoplasm. Component of immature procapsids, which is cleaved into capsid proteins VP4 and VP2 after maturation. Allows the capsid to remain inactive before the maturation step. Its function is as follows. Cysteine protease that cleaves viral polyprotein and specific host proteins. It is responsible for the autocatalytic cleavage between the P1 and P2 regions, which is the first cleavage occurring in the polyprotein. Also cleaves the host translation initiation factor EIF4G1, in order to shut down the capped cellular mRNA translation. Inhibits the host nucleus-cytoplasm protein and RNA trafficking by cleaving host members of the nuclear pores. Counteracts stress granule formation probably by antagonizing its assembly or promoting its dissassembly. In terms of biological role, plays an essential role in the virus replication cycle by acting as a viroporin. Creates a pore in the host endoplasmic reticulum and as a consequence releases Ca2+ in the cytoplasm of infected cell. In turn, high levels of cytoplasmic calcium may trigger membrane trafficking and transport of viral ER-associated proteins to viroplasms, sites of viral genome replication. Functionally, induces and associates with structural rearrangements of intracellular membranes. Displays RNA-binding, nucleotide binding and NTPase activities. May play a role in virion morphogenesis and viral RNA encapsidation by interacting with the capsid protein VP3. Localizes the viral replication complex to the surface of membranous vesicles. It inhibits host cell endoplasmic reticulum-to-Golgi apparatus transport and causes the disassembly of the Golgi complex, possibly through GBF1 interaction. This would result in depletion of MHC, trail receptors and IFN receptors at the host cell surface. Plays an essential role in viral RNA replication by recruiting ACBD3 and PI4KB at the viral replication sites, thereby allowing the formation of the rearranged membranous structures where viral replication takes place. Its function is as follows. Acts as a primer for viral RNA replication and remains covalently bound to viral genomic RNA. VPg is uridylylated prior to priming replication into VPg-pUpU. The oriI viral genomic sequence may act as a template for this. The VPg-pUpU is then used as primer on the genomic RNA poly(A) by the RNA-dependent RNA polymerase to replicate the viral genome. During genome replication, the VPg-RNA linkage is removed by the host TDP2, thereby accelerating replication. During the late stage of the replication cycle, host TDP2 is excluded from sites of viral RNA synthesis and encapsidation, allowing for the generation of progeny virions. In terms of biological role, involved in the viral replication complex and viral polypeptide maturation. It exhibits protease activity with a specificity and catalytic efficiency that is different from protease 3C. Protein 3CD lacks polymerase activity. Protein 3CD binds to the 5'UTR of the viral genome. Functionally, major viral protease that mediates proteolytic processing of the polyprotein. Cleaves host EIF5B, contributing to host translation shutoff. Also cleaves host PABPC1, contributing to host translation shutoff. Cleaves host NLRP1, triggers host N-glycine-mediated degradation of the autoinhibitory NLRP1 N-terminal fragment. Replicates the viral genomic RNA on the surface of intracellular membranes. May form linear arrays of subunits that propagate along a strong head-to-tail interaction called interface-I. Covalently attaches UMP to a tyrosine of VPg, which is used to prime RNA synthesis. The positive stranded RNA genome is first replicated at virus induced membranous vesicles, creating a dsRNA genomic replication form. This dsRNA is then used as template to synthesize positive stranded RNA genomes. ss(+)RNA genomes are either translated, replicated or encapsidated. This chain is Genome polyprotein, found in Human rhinovirus 16 (HRV-16).